A 131-amino-acid chain; its full sequence is Ribosome-binding factor A (131 aa).

This sequence belongs to the RbfA family. As to quaternary structure, monomer. Binds 30S ribosomal subunits, but not 50S ribosomal subunits or 70S ribosomes.

The protein localises to the cytoplasm. Functionally, one of several proteins that assist in the late maturation steps of the functional core of the 30S ribosomal subunit. Associates with free 30S ribosomal subunits (but not with 30S subunits that are part of 70S ribosomes or polysomes). Required for efficient processing of 16S rRNA. May interact with the 5'-terminal helix region of 16S rRNA. The protein is Ribosome-binding factor A of Mannheimia succiniciproducens (strain KCTC 0769BP / MBEL55E).